A 157-amino-acid chain; its full sequence is Ribonuclease H (157 aa).

In terms of domain architecture, RNase H type-1 spans 1 to 146; it reads MPELFAYTDG…ADALAREGMA (146 aa). The Mg(2+) site is built by aspartate 9, glutamate 52, aspartate 74, and aspartate 138.

It belongs to the RNase H family. Monomer. It depends on Mg(2+) as a cofactor.

Its subcellular location is the cytoplasm. The enzyme catalyses Endonucleolytic cleavage to 5'-phosphomonoester.. Endonuclease that specifically degrades the RNA of RNA-DNA hybrids. The chain is Ribonuclease H from Dinoroseobacter shibae (strain DSM 16493 / NCIMB 14021 / DFL 12).